A 228-amino-acid chain; its full sequence is MSDFRKEFIEFAIGRNVLCFGEFQTKAGRISPYFFNAGLFNDGESLGKLGQFYAKAILAAQLPFDMLFGPAYKGIPLVSSIAIALADGGNNYPFCFNRKEAKDHGEGGNLVGAPLAGRVLIVDDVISAGTSVRESVEYIHAAGATPAGVAIALDRMERGKGELSAVQEVRCMYGIPVTSIVNLENIVDYLREQGNLAHHLPAVEEYRARYSSRMVEPIECGGGTPRAG.

A 5-phospho-alpha-D-ribose 1-diphosphate-binding site is contributed by Lys26. 34–35 (FF) serves as a coordination point for orotate. Residues 72 to 73 (YK), Arg98, Lys99, Lys102, His104, and 123 to 131 (DDVISAGTS) each bind 5-phospho-alpha-D-ribose 1-diphosphate. Orotate is bound by residues Ser127 and Arg155.

This sequence belongs to the purine/pyrimidine phosphoribosyltransferase family. PyrE subfamily. In terms of assembly, homodimer. Mg(2+) is required as a cofactor.

The enzyme catalyses orotidine 5'-phosphate + diphosphate = orotate + 5-phospho-alpha-D-ribose 1-diphosphate. Its pathway is pyrimidine metabolism; UMP biosynthesis via de novo pathway; UMP from orotate: step 1/2. Catalyzes the transfer of a ribosyl phosphate group from 5-phosphoribose 1-diphosphate to orotate, leading to the formation of orotidine monophosphate (OMP). The sequence is that of Orotate phosphoribosyltransferase from Nitrosospira multiformis (strain ATCC 25196 / NCIMB 11849 / C 71).